We begin with the raw amino-acid sequence, 451 residues long: UDP-N-acetylmuramoylalanine--D-glutamate ligase (451 aa).

118-124 (GTKGKST) provides a ligand contact to ATP.

This sequence belongs to the MurCDEF family.

The protein localises to the cytoplasm. The catalysed reaction is UDP-N-acetyl-alpha-D-muramoyl-L-alanine + D-glutamate + ATP = UDP-N-acetyl-alpha-D-muramoyl-L-alanyl-D-glutamate + ADP + phosphate + H(+). It functions in the pathway cell wall biogenesis; peptidoglycan biosynthesis. Its function is as follows. Cell wall formation. Catalyzes the addition of glutamate to the nucleotide precursor UDP-N-acetylmuramoyl-L-alanine (UMA). This is UDP-N-acetylmuramoylalanine--D-glutamate ligase from Borreliella burgdorferi (strain ZS7) (Borrelia burgdorferi).